The sequence spans 250 residues: Triosephosphate isomerase (250 aa).

Substrate is bound at residue 9–11 (NWK). His-95 functions as the Electrophile in the catalytic mechanism. The Proton acceptor role is filled by Glu-167. Substrate contacts are provided by residues Gly-173, Ser-213, and 234–235 (GG).

Belongs to the triosephosphate isomerase family. As to quaternary structure, homodimer.

Its subcellular location is the cytoplasm. It carries out the reaction D-glyceraldehyde 3-phosphate = dihydroxyacetone phosphate. It functions in the pathway carbohydrate biosynthesis; gluconeogenesis. The protein operates within carbohydrate degradation; glycolysis; D-glyceraldehyde 3-phosphate from glycerone phosphate: step 1/1. Functionally, involved in the gluconeogenesis. Catalyzes stereospecifically the conversion of dihydroxyacetone phosphate (DHAP) to D-glyceraldehyde-3-phosphate (G3P). The chain is Triosephosphate isomerase from Chloroflexus aurantiacus (strain ATCC 29366 / DSM 635 / J-10-fl).